Here is a 290-residue protein sequence, read N- to C-terminus: Inositol-1-monophosphatase (290 aa).

Positions 83, 104, 106, and 107 each coordinate Mg(2+). Glu-83 serves as a coordination point for substrate. Residues 106 to 109, Arg-206, and Asp-235 each bind substrate; that span reads IDGT. Residue Asp-235 coordinates Mg(2+).

The protein belongs to the inositol monophosphatase superfamily. The cofactor is Mg(2+).

It carries out the reaction a myo-inositol phosphate + H2O = myo-inositol + phosphate. In Mycobacterium bovis (strain ATCC BAA-935 / AF2122/97), this protein is Inositol-1-monophosphatase (suhB).